The chain runs to 83 residues: uncharacterized protein (83 aa).

The next 3 helical transmembrane spans lie at 4–24, 32–52, and 54–74; these read AILSNYLYYPSILAFLFGVLM, IGNIFGYLILTVVIAYFLKAF, and YYDLLPLSCSYLSAVIGIIIG.

It is found in the cell membrane. This is an uncharacterized protein from Methanocaldococcus jannaschii (strain ATCC 43067 / DSM 2661 / JAL-1 / JCM 10045 / NBRC 100440) (Methanococcus jannaschii).